The chain runs to 125 residues: MGRKNDIIQKIDSFIGKKIYSLRLAKGLSRQQLAEVIDVTHQQLQKYEKAINRISVGRLVLIAEALDRNIDYFFEGLEEANKPQPVHTQHQRMCIEVSRNFMKINSTEEQQAVNNLVKCLAGKKN.

Residues 19 to 73 (IYSLRLAKGLSRQQLAEVIDVTHQQLQKYEKAINRISVGRLVLIAEALDRNIDYF) enclose the HTH cro/C1-type domain. Residues 30-49 (RQQLAEVIDVTHQQLQKYEK) constitute a DNA-binding region (H-T-H motif).

This is an uncharacterized protein from Rickettsia conorii (strain ATCC VR-613 / Malish 7).